The chain runs to 135 residues: Biglycan (135 aa).

5 LRR repeats span residues 4-24 (KLNYLRISEAKLTGIPKDLPE), 25-46 (TLNELHLDHNKIQAIELEDLLR), 49-72 (KLYRLGLGHNQIRMIENGSLSFLP), 73-95 (TLRELHLDNNKLSRVPAGLPDLK), and 96-117 (LLQVVYLHSNNITKVGVNDFCP). Asparagine 65 carries an N-linked (GlcNAc...) asparagine glycan. Asparagine 106 is a glycosylation site (N-linked (GlcNAc...) asparagine).

Belongs to the small leucine-rich proteoglycan (SLRP) family. SLRP class I subfamily. As to quaternary structure, homodimer. Forms a ternary complex with MFAP2 and ELN. In terms of processing, the two attached glycosaminoglycan chains can be either chondroitin sulfate or dermatan sulfate. In terms of tissue distribution, found in several connective tissues, especially in articular cartilages.

Its subcellular location is the secreted. The protein resides in the extracellular space. The protein localises to the extracellular matrix. In terms of biological role, may be involved in collagen fiber assembly. This is Biglycan (BGN) from Oryctolagus cuniculus (Rabbit).